The primary structure comprises 3390 residues: Genome polyprotein (3390 aa).

Positions 1-15 (MNNQRKKTGKPSINM) are interaction with host EXOC1. Residues 1 to 100 (MNNQRKKTGK…MLSIINKRKK (100 aa)) lie on the Cytoplasmic side of the membrane. Positions 37 to 72 (LLNGQGPMKLVMAFIAFLRFLAIPPTAGVLARWGTF) are hydrophobic; homodimerization of capsid protein C. The propeptide at 101 to 114 (TSLCLMMIMPAALA) is ER anchor for the capsid protein C, removed in mature form by serine protease NS3. The chain crosses the membrane as a helical span at residues 101 to 120 (TSLCLMMIMPAALAFHLTSR). Residues 121–243 (DGEPRMIVGK…VEKVETWALR (123 aa)) are Extracellular-facing. N-linked (GlcNAc...) asparagine; by host glycosylation occurs at N183. The chain crosses the membrane as a helical span at residues 244-264 (HPGFTILALFLAHYIGTSLTQ). K265 is a topological domain (cytoplasmic). The chain crosses the membrane as a helical span at residues 266–280 (VVIFILLMLVTPSMT). Topologically, residues 281–723 (MRCVGVGNRD…VHQIFGSAYT (443 aa)) are extracellular. 4 disulfides stabilise this stretch: C283/C310, C340/C401, C354/C385, and C372/C396. N-linked (GlcNAc...) asparagine; by host glycosylation is present at N347. A fusion peptide region spans residues 378-391 (DRGWGNGCGLFGKG). Residue N433 is glycosylated (N-linked (GlcNAc...) asparagine; by host). 2 disulfide bridges follow: C463–C563 and C580–C611. A helical transmembrane segment spans residues 724-744 (ALFSGVSWVMKIGIGVLLTWI). Residues 745–750 (GLNSKN) lie on the Cytoplasmic side of the membrane. The chain crosses the membrane as a helical span at residues 751–771 (TSMSFSCIAIGIITLYLGAVV). Residues 772-1193 (QADMGCVINW…MIGSNASDRM (422 aa)) are Extracellular-facing. Cystine bridges form between C777–C788, C828–C916, C952–C996, C1053–C1102, C1064–C1086, and C1085–C1089. N-linked (GlcNAc...) asparagine; by host glycosylation is found at N903 and N980. 2 N-linked (GlcNAc...) asparagine; by host glycosylation sites follow: N1132 and N1188. A helical membrane pass occupies residues 1194-1218 (GMGVTYLALIATFKIQPFLALGFFL). The Cytoplasmic segment spans residues 1219-1224 (RKLTSR). The chain crosses the membrane as a helical span at residues 1225 to 1243 (ENLLLGVGLAMATTLQLPE). The Lumenal segment spans residues 1244–1267 (DIEQMANGIALGLMALKLITQFET). Residues 1268–1288 (YQLWTALISLTCSNTMFTLTV) form a helical membrane-spanning segment. Position 1289 (A1289) is a topological domain, cytoplasmic. The chain crosses the membrane as a helical span at residues 1290-1308 (WRTATLILAGVSLLPVCQS). Topologically, residues 1309-1315 (SSMRKTD) are lumenal. A helical membrane pass occupies residues 1316–1336 (WLPMAVAAMGVPPLPLFIFSL). Residues 1337–1344 (KDTLKRRS) lie on the Cytoplasmic side of the membrane. A helical transmembrane segment spans residues 1345-1365 (WPLNEGVMAVGLVSILASSLL). The Lumenal portion of the chain corresponds to 1366-1368 (RND). Residues 1369–1389 (VPMAGPLVAGGLLIACYVITG) traverse the membrane as a helical segment. At 1390-1443 (TSADLTVEKAADITWEEEAEQTGVSHNLMITVDDDGTMRIKDDETENILTVLLK) the chain is on the cytoplasmic side. The interval 1396-1435 (VEKAADITWEEEAEQTGVSHNLMITVDDDGTMRIKDDETE) is interacts with and activates NS3 protease. The helical intramembrane region spans 1444 to 1464 (TALLIVSGVFPYSIPATLLVW). At 1465–2146 (HTWQKQTQRS…VEELPETMET (682 aa)) the chain is on the cytoplasmic side. Positions 1474 to 1651 (SGVLWDVPSP…NAEPDGPTPE (178 aa)) constitute a Peptidase S7 domain. Active-site charge relay system; for serine protease NS3 activity residues include H1524, D1548, and S1608. In terms of domain architecture, Helicase ATP-binding spans 1654–1810 (EEMFKKRNLT…QSNAPIQDEE (157 aa)). The segment at 1658–1661 (KKRN) is important for RNA-binding. 1667–1674 (LHPGSGKT) contacts ATP. The DEAH box motif lies at 1758–1761 (DEAH). The region spanning 1820–1986 (SGNEWITDFA…GIIPALFEPE (167 aa)) is the Helicase C-terminal domain. An N6-acetyllysine; by host modification is found at K1862. Residues 2147-2167 (LLLLGLMILLTGGAMLFLISG) form a helical membrane-spanning segment. Residues 2168–2169 (KG) lie on the Lumenal side of the membrane. The segment at residues 2170–2190 (IGKTSIGLICVIASSGMLWMA) is an intramembrane region (helical). A topological domain (lumenal) is located at residue E2191. A helical membrane pass occupies residues 2192–2212 (IPLQWIASAIVLEFFMMVLLI). Residues 2213-2227 (PEPEKQRTPQDNQLA) lie on the Cytoplasmic side of the membrane. Residues 2228 to 2248 (YVVIGILTLAAIIAANEMGLL) form a helical membrane-spanning segment. Topologically, residues 2249 to 2273 (ETTKRDLGMSKEPGVVSPTSYLDVD) are lumenal. Positions 2274-2294 (LHPASAWTLYAVATTVITPML) form an intramembrane region, helical. The Lumenal segment spans residues 2295-2305 (RHTIENSTANV). N-linked (GlcNAc...) asparagine; by host glycans are attached at residues N2300 and N2304. Residues 2306 to 2326 (SLAAIANQAVVLMGLDKGWPI) constitute an intramembrane region (helical). At 2327–2346 (SKMDLGVPLLALGCYSQVNP) the chain is on the lumenal side. The helical transmembrane segment at 2347-2367 (LTLTAAVLLLITHYAIIGPGL) threads the bilayer. The Cytoplasmic portion of the chain corresponds to 2368-2412 (QAKATREAQKRTAAGIMKNPTVDGIMTIDLDPVIYDSKFEKQLGQ). A helical transmembrane segment spans residues 2413 to 2433 (VMLLVLCAVQLLLMRTSWALC). The Lumenal portion of the chain corresponds to 2434 to 2458 (EALTLATGPITTLWEGSPGKFWNTT). N2456 carries N-linked (GlcNAc...) asparagine; by host glycosylation. A helical membrane pass occupies residues 2459–2479 (IAVSMANIFRGSYLAGAGLAF). Over 2480-3390 (SIMKSVGTGK…KEEESEGAIW (911 aa)) the chain is Cytoplasmic. Residues 2492–2753 (TGSQGETLGE…DVDLGAGTRH (262 aa)) form the mRNA cap 0-1 NS5-type MT domain. Residue S2546 coordinates S-adenosyl-L-methionine. S2546 carries the post-translational modification Phosphoserine. The active-site For 2'-O-MTase activity is K2551. The short motif at 2567 to 2570 (VIDL) is the SUMO-interacting motif element. Residues G2576, W2577, T2594, K2595, D2621, and V2622 each contribute to the S-adenosyl-L-methionine site. Residue D2636 is the For 2'-O-MTase activity of the active site. An S-adenosyl-L-methionine-binding site is contributed by I2637. Residues K2670 and E2706 each act as for 2'-O-MTase activity in the active site. Y2708 serves as a coordination point for S-adenosyl-L-methionine. Zn(2+)-binding residues include E2927, H2931, C2936, and C2939. The RdRp catalytic domain occupies 3018-3168 (AMYADDTAGW…PIDDRFANAL (151 aa)). The Zn(2+) site is built by H3202, C3218, and C3337.

In the N-terminal section; belongs to the class I-like SAM-binding methyltransferase superfamily. mRNA cap 0-1 NS5-type methyltransferase family. As to quaternary structure, homodimer. Interacts (via N-terminus) with host EXOC1 (via C-terminus); this interaction results in EXOC1 degradation through the proteasome degradation pathway. Forms heterodimers with envelope protein E in the endoplasmic reticulum and Golgi. In terms of assembly, homodimer; in the endoplasmic reticulum and Golgi. Interacts with protein prM. Interacts with non-structural protein 1. As to quaternary structure, homodimer; Homohexamer when secreted. Interacts with envelope protein E. Interacts (via N-terminus) with serine protease NS3. In terms of assembly, forms a heterodimer with serine protease NS3. May form homooligomers. As to quaternary structure, forms a heterodimer with NS2B. Interacts with NS4B. Interacts with unphosphorylated RNA-directed RNA polymerase NS5; this interaction stimulates RNA-directed RNA polymerase NS5 guanylyltransferase activity. Interacts with host MAVS; this interaction inhibits the synthesis of IFN-beta. Interacts with host AUP1; the interaction occurs in the presence of Dengue virus NS4B and induces lipophagy which facilitates production of virus progeny particles. In terms of assembly, interacts with serine protease NS3. As to quaternary structure, homodimer. Interacts with host STAT2; this interaction inhibits the phosphorylation of the latter, and, when all viral proteins are present (polyprotein), targets STAT2 for degradation. Interacts with serine protease NS3. Specific enzymatic cleavages in vivo yield mature proteins. Cleavages in the lumen of endoplasmic reticulum are performed by host signal peptidase, whereas cleavages in the cytoplasmic side are performed by serine protease NS3. Signal cleavage at the 2K-4B site requires a prior NS3 protease-mediated cleavage at the 4A-2K site. Post-translationally, cleaved in post-Golgi vesicles by a host furin, releasing the mature small envelope protein M, and peptide pr. This cleavage is incomplete as up to 30% of viral particles still carry uncleaved prM. In terms of processing, N-glycosylated. N-glycosylated. The excreted form is glycosylated and this is required for efficient secretion of the protein from infected cells. Post-translationally, acetylated by host KAT5. Acetylation modulates NS3 RNA-binding and unwinding activities and plays an important positive role for viral replication. In terms of processing, sumoylation of RNA-directed RNA polymerase NS5 increases NS5 protein stability allowing proper viral RNA replication. Phosphorylated on serines residues. This phosphorylation may trigger NS5 nuclear localization.

Its subcellular location is the virion. The protein localises to the host nucleus. It is found in the host cytoplasm. The protein resides in the host perinuclear region. It localises to the secreted. Its subcellular location is the virion membrane. The protein localises to the host endoplasmic reticulum membrane. It is found in the host mitochondrion. The catalysed reaction is Selective hydrolysis of -Xaa-Xaa-|-Yaa- bonds in which each of the Xaa can be either Arg or Lys and Yaa can be either Ser or Ala.. It carries out the reaction RNA(n) + a ribonucleoside 5'-triphosphate = RNA(n+1) + diphosphate. The enzyme catalyses a ribonucleoside 5'-triphosphate + H2O = a ribonucleoside 5'-diphosphate + phosphate + H(+). It catalyses the reaction ATP + H2O = ADP + phosphate + H(+). The catalysed reaction is a 5'-end (5'-triphosphoguanosine)-ribonucleoside in mRNA + S-adenosyl-L-methionine = a 5'-end (N(7)-methyl 5'-triphosphoguanosine)-ribonucleoside in mRNA + S-adenosyl-L-homocysteine. It carries out the reaction a 5'-end (N(7)-methyl 5'-triphosphoguanosine)-ribonucleoside in mRNA + S-adenosyl-L-methionine = a 5'-end (N(7)-methyl 5'-triphosphoguanosine)-(2'-O-methyl-ribonucleoside) in mRNA + S-adenosyl-L-homocysteine + H(+). Functionally, plays a role in virus budding by binding to the cell membrane and gathering the viral RNA into a nucleocapsid that forms the core of a mature virus particle. During virus entry, may induce genome penetration into the host cytoplasm after hemifusion induced by the surface proteins. Can migrate to the cell nucleus where it modulates host functions. Overcomes the anti-viral effects of host EXOC1 by sequestering and degrading the latter through the proteasome degradation pathway. Inhibits RNA silencing by interfering with host Dicer. In terms of biological role, prevents premature fusion activity of envelope proteins in trans-Golgi by binding to envelope protein E at pH6.0. After virion release in extracellular space, gets dissociated from E dimers. Its function is as follows. Acts as a chaperone for envelope protein E during intracellular virion assembly by masking and inactivating envelope protein E fusion peptide. prM is the only viral peptide matured by host furin in the trans-Golgi network probably to avoid catastrophic activation of the viral fusion activity in acidic Golgi compartment prior to virion release. prM-E cleavage is inefficient, and many virions are only partially matured. These uncleaved prM would play a role in immune evasion. Functionally, may play a role in virus budding. Exerts cytotoxic effects by activating a mitochondrial apoptotic pathway through M ectodomain. May display a viroporin activity. Binds to host cell surface receptor and mediates fusion between viral and cellular membranes. Envelope protein is synthesized in the endoplasmic reticulum in the form of heterodimer with protein prM. They play a role in virion budding in the ER, and the newly formed immature particle is covered with 60 spikes composed of heterodimer between precursor prM and envelope protein E. The virion is transported to the Golgi apparatus where the low pH causes dissociation of PrM-E heterodimers and formation of E homodimers. prM-E cleavage is inefficient, and many virions are only partially matured. These uncleaved prM would play a role in immune evasion. In terms of biological role, involved in immune evasion, pathogenesis and viral replication. Once cleaved off the polyprotein, is targeted to three destinations: the viral replication cycle, the plasma membrane and the extracellular compartment. Essential for viral replication. Required for formation of the replication complex and recruitment of other non-structural proteins to the ER-derived membrane structures. Excreted as a hexameric lipoparticle that plays a role against host immune response. Antagonizing the complement function. Binds to the host macrophages and dendritic cells. Inhibits signal transduction originating from Toll-like receptor 3 (TLR3). Its function is as follows. Disrupts the host endothelial glycocalyx layer of host pulmonary microvascular endothelial cells, inducing degradation of sialic acid and shedding of heparan sulfate proteoglycans. NS1 induces expression of sialidases, heparanase, and activates cathepsin L, which activates heparanase via enzymatic cleavage. These effects are probably linked to the endothelial hyperpermeability observed in severe dengue disease. Functionally, component of the viral RNA replication complex that functions in virion assembly and antagonizes the host immune response. Required cofactor for the serine protease function of NS3. May have membrane-destabilizing activity and form viroporins. In terms of biological role, displays three enzymatic activities: serine protease, NTPase and RNA helicase. NS3 serine protease, in association with NS2B, performs its autocleavage and cleaves the polyprotein at dibasic sites in the cytoplasm: C-prM, NS2A-NS2B, NS2B-NS3, NS3-NS4A, NS4A-2K and NS4B-NS5. NS3 RNA helicase binds RNA and unwinds dsRNA in the 3' to 5' direction. Its function is as follows. Regulates the ATPase activity of the NS3 helicase activity. NS4A allows NS3 helicase to conserve energy during unwinding. Plays a role in the inhibition of the host innate immune response. Interacts with host MAVS and thereby prevents the interaction between RIGI and MAVS. In turn, IFN-beta production is impaired. Interacts with host AUP1 which mediates induction of lipophagy in host cells and facilitates production of virus progeny particles. Functionally, functions as a signal peptide for NS4B and is required for the interferon antagonism activity of the latter. Induces the formation of ER-derived membrane vesicles where the viral replication takes place. Inhibits interferon (IFN)-induced host STAT1 phosphorylation and nuclear translocation, thereby preventing the establishment of cellular antiviral state by blocking the IFN-alpha/beta pathway. In terms of biological role, replicates the viral (+) and (-) RNA genome, and performs the capping of genomes in the cytoplasm. NS5 methylates viral RNA cap at guanine N-7 and ribose 2'-O positions. Besides its role in RNA genome replication, also prevents the establishment of cellular antiviral state by blocking the interferon-alpha/beta (IFN-alpha/beta) signaling pathway. Inhibits host TYK2 and STAT2 phosphorylation, thereby preventing activation of JAK-STAT signaling pathway. The sequence is that of Genome polyprotein (pol) from Dengue virus type 3 (strain Martinique/1243/1999) (DENV-3).